Consider the following 396-residue polypeptide: Phosphopentomutase (396 aa).

6 residues coordinate Mn(2+): D13, D288, H293, D329, H330, and H341.

This sequence belongs to the phosphopentomutase family. Mn(2+) is required as a cofactor.

Its subcellular location is the cytoplasm. It catalyses the reaction 2-deoxy-alpha-D-ribose 1-phosphate = 2-deoxy-D-ribose 5-phosphate. The catalysed reaction is alpha-D-ribose 1-phosphate = D-ribose 5-phosphate. The protein operates within carbohydrate degradation; 2-deoxy-D-ribose 1-phosphate degradation; D-glyceraldehyde 3-phosphate and acetaldehyde from 2-deoxy-alpha-D-ribose 1-phosphate: step 1/2. Functionally, isomerase that catalyzes the conversion of deoxy-ribose 1-phosphate (dRib-1-P) and ribose 1-phosphate (Rib-1-P) to deoxy-ribose 5-phosphate (dRib-5-P) and ribose 5-phosphate (Rib-5-P), respectively. This is Phosphopentomutase from Clostridium perfringens (strain SM101 / Type A).